The following is a 769-amino-acid chain: 5-methyltetrahydropteroyltriglutamate--homocysteine methyltransferase (769 aa).

Residues 16-19 (RELK) and Lys-118 each bind 5-methyltetrahydropteroyltri-L-glutamate. Residues 440–442 (IGS) and Glu-493 contribute to the L-homocysteine site. Residues 440-442 (IGS) and Glu-493 contribute to the L-methionine site. Residues 524–525 (RC) and Trp-570 each bind 5-methyltetrahydropteroyltri-L-glutamate. Asp-608 is a binding site for L-homocysteine. Asp-608 serves as a coordination point for L-methionine. Position 614 (Glu-614) interacts with 5-methyltetrahydropteroyltri-L-glutamate. The Zn(2+) site is built by His-650, Cys-652, and Glu-674. His-706 (proton donor) is an active-site residue. Cys-738 is a binding site for Zn(2+).

The protein belongs to the vitamin-B12 independent methionine synthase family. Zn(2+) is required as a cofactor.

It carries out the reaction 5-methyltetrahydropteroyltri-L-glutamate + L-homocysteine = tetrahydropteroyltri-L-glutamate + L-methionine. It functions in the pathway amino-acid biosynthesis; L-methionine biosynthesis via de novo pathway; L-methionine from L-homocysteine (MetE route): step 1/1. Catalyzes the transfer of a methyl group from 5-methyltetrahydrofolate to homocysteine resulting in methionine formation. The polypeptide is 5-methyltetrahydropteroyltriglutamate--homocysteine methyltransferase (Acidiphilium cryptum (strain JF-5)).